The primary structure comprises 286 residues: ATP synthase gamma chain (286 aa).

This sequence belongs to the ATPase gamma chain family. As to quaternary structure, F-type ATPases have 2 components, CF(1) - the catalytic core - and CF(0) - the membrane proton channel. CF(1) has five subunits: alpha(3), beta(3), gamma(1), delta(1), epsilon(1). CF(0) has three main subunits: a, b and c.

It localises to the cell inner membrane. Produces ATP from ADP in the presence of a proton gradient across the membrane. The gamma chain is believed to be important in regulating ATPase activity and the flow of protons through the CF(0) complex. The protein is ATP synthase gamma chain of Pseudoalteromonas atlantica (strain T6c / ATCC BAA-1087).